The sequence spans 416 residues: MSTATDTAAPAKKRGSGLFQGLQKVGRSLQLPIAVLPAAGIMVRLGQDDIFGKDGLGWDKVAAVFNNAGGALTGSLPILFCIGVAIGFAKKADGSTALAAVVGFLVYSKVLEAFPVTEAVVQDGADVAATYNDPGVLGGIIMGLLAAVLWQRYHRKKLVDWLGFFNGRRLVPIIMAFVGIVVGVFFGLVWEPIGDGISNFGEWMTGLGSGGAALFGGVNRALIPVGMHQFVNTVAWFQLGDFTNSAGDVVHGDITRFLAGDPSAGIFQAGFFPIMMFGLPAAALAMAHTARPERRKAVLGMMISLAATSFVTGVTEPIEFSFMFIAPVLYVLHAVLTAISMAITWGLGVHAGFNFSAGFIDYALNWHLATKPWLIIPIGLVFAAIYYVTFRFAIVKFNLKTPGREPEEEVEDLTKA.

The PTS EIIC type-1 domain maps to 16–406 (SGLFQGLQKV…FNLKTPGREP (391 aa)). Transmembrane regions (helical) follow at residues 68–88 (AGGALTGSLPILFCIGVAIGF), 96–116 (TALAAVVGFLVYSKVLEAFPV), 130–150 (TYNDPGVLGGIIMGLLAAVLW), 170–190 (LVPIIMAFVGIVVGVFFGLVW), 196–216 (GISNFGEWMTGLGSGGAALFG), 266–286 (IFQAGFFPIMMFGLPAAALAM), 298–318 (VLGMMISLAATSFVTGVTEPI), 323–343 (MFIAPVLYVLHAVLTAISMAI), 344–364 (TWGLGVHAGFNFSAGFIDYAL), and 375–395 (IIPIGLVFAAIYYVTFRFAIV).

Its subcellular location is the cell membrane. Its function is as follows. The phosphoenolpyruvate-dependent sugar phosphotransferase system (sugar PTS), a major carbohydrate active transport system, catalyzes the phosphorylation of incoming sugar substrates concomitantly with their translocation across the cell membrane. This system is involved in N-acetylglucosamine (GlcNAc) transport. High-affinity permease, which exhibits a narrow specificity for GlcNAc. Essential for C-signaling between vegetative growth and development. This is PTS system N-acetylglucosamine-specific EIIC component from Streptomyces coelicolor (strain ATCC BAA-471 / A3(2) / M145).